A 186-amino-acid polypeptide reads, in one-letter code: MFRGIVQGRGVIRSISKSEDSQRHGIAFPEGMFQLVDVDTVMLVNGCSLTVVRILGDMVYFDIDQALGTTTFDGLKEGDQVNLEIHPKFGEVVGRGGLTGNIKGTALVAAIEENDAGFSVLIDIPKGLAENLTVKDDIGIDGISLPITDMSDSIITLNYSRDLLASTNIASLAKDVKVNVEILNEW.

2 Lumazine-binding repeats span residues 1-96 (MFRG…VGRG) and 97-186 (GLTG…LNEW).

6,7-dimethyl-8-(1-D-ribityl)lumazine is required as a cofactor.

In terms of biological role, antenna protein that modulates the color of the bioluminescence emission of the luciferase. In the presence of LumP, luciferase emission is shifted to higher energy values (shorter wavelength). In Photobacterium leiognathi, this protein is Lumazine protein (lumP).